Reading from the N-terminus, the 354-residue chain is Period circadian protein (354 aa).

2 PAS domains span residues 1 to 55 (GIVM…VNGQ) and 133 to 235 (FVMR…HIIE). Positions 318 to 354 (IQDPDHSYYQRDSVMLGGISPHHDYNDSKSSTGTPLS) are disordered. Positions 345-354 (SKSSTGTPLS) are enriched in polar residues.

In terms of assembly, forms a heterodimer with timeless (TIM); the complex then translocates into the nucleus. In terms of processing, phosphorylated with a circadian rhythmicity.

The protein localises to the nucleus. Functionally, involved in the generation of biological rhythms. The biological cycle depends on the rhythmic formation and nuclear localization of the tim-per complex. Light induces the degradation of tim, which promotes elimination of per. Nuclear activity of the heterodimer coordinatively regulates per and tim transcription negative feedback loop. Behaves as a negative element in circadian transcriptional loop. Does not appear to bind DNA, suggesting indirect transcriptional inhibition. This Manduca sexta (Tobacco hawkmoth) protein is Period circadian protein (per).